The sequence spans 475 residues: MEIOTIC F-BOX protein MOF (475 aa).

Residues 1 to 58 (MRRERDATQIPENPMEGIPQTAAAAAAAAAAEASEPPRKRARVDGGGGGAGEEEEDRL) form a disordered region. The segment covering 22 to 33 (AAAAAAAAAAEA) has biased composition (low complexity). The region spanning 55-91 (EDRLSDLPDCLLEDILAHLGSRQAVQTSVLSRRWRNL) is the F-box domain.

This sequence belongs to the F-box protein family. FBX subfamily. In terms of assembly, part of a SCF (SKP1-CUL1-F-box protein) E3 ubiquitin-protein ligase complex. Interacts (via F-box domain) directly with SKP1. As to expression, highly expressed in the stem, leaf and in the anther during meiosis. Weakly expressed in roots and lemma/palea.

It localises to the nucleus. The protein resides in the chromosome. It participates in protein modification; protein ubiquitination. Probable component of a SCF (SKP1-CULLIN-F-box protein) E3 ubiquitin-protein ligase complex and may function through the ubiquitin-mediated protein degradation or signaling pathway. Required for male meiotic prophase I progression. Required for telomere bouquet formation, homologous chromosome pairing and for the formation of the synaptonemal complex (SC), which stabilizes initial chromosomal axial associations and promotes crossover formation. Involved in meiotic DNA double-strand break (DSB) end-processing and repair, and is important in the recruitment of DSB repair proteins to the DSB sites. The sequence is that of MEIOTIC F-BOX protein MOF from Oryza sativa subsp. japonica (Rice).